A 122-amino-acid chain; its full sequence is Large ribosomal subunit protein uL14 (122 aa).

This sequence belongs to the universal ribosomal protein uL14 family. In terms of assembly, part of the 50S ribosomal subunit. Forms a cluster with proteins L3 and L19. In the 70S ribosome, L14 and L19 interact and together make contacts with the 16S rRNA in bridges B5 and B8.

Functionally, binds to 23S rRNA. Forms part of two intersubunit bridges in the 70S ribosome. The polypeptide is Large ribosomal subunit protein uL14 (Sorangium cellulosum (strain So ce56) (Polyangium cellulosum (strain So ce56))).